The chain runs to 544 residues: Glucans biosynthesis protein G (544 aa).

The signal sequence occupies residues 1–34 (MVSLLRCQSSKPYSSLICSLALGVAFALSGTAYA).

It belongs to the OpgD/OpgG family.

It localises to the periplasm. It functions in the pathway glycan metabolism; osmoregulated periplasmic glucan (OPG) biosynthesis. Involved in the biosynthesis of osmoregulated periplasmic glucans (OPGs). In Shewanella putrefaciens (strain CN-32 / ATCC BAA-453), this protein is Glucans biosynthesis protein G.